The chain runs to 488 residues: Glutamyl-tRNA(Gln) amidotransferase subunit A (488 aa).

Residues Lys77 and Ser152 each act as charge relay system in the active site. Ser176 (acyl-ester intermediate) is an active-site residue.

Belongs to the amidase family. GatA subfamily. Heterotrimer of A, B and C subunits.

It carries out the reaction L-glutamyl-tRNA(Gln) + L-glutamine + ATP + H2O = L-glutaminyl-tRNA(Gln) + L-glutamate + ADP + phosphate + H(+). Functionally, allows the formation of correctly charged Gln-tRNA(Gln) through the transamidation of misacylated Glu-tRNA(Gln) in organisms which lack glutaminyl-tRNA synthetase. The reaction takes place in the presence of glutamine and ATP through an activated gamma-phospho-Glu-tRNA(Gln). This is Glutamyl-tRNA(Gln) amidotransferase subunit A from Latilactobacillus sakei subsp. sakei (strain 23K) (Lactobacillus sakei subsp. sakei).